The sequence spans 66 residues: Large ribosomal subunit protein uL29 (66 aa).

It belongs to the universal ribosomal protein uL29 family.

This is Large ribosomal subunit protein uL29 from Pseudothermotoga lettingae (strain ATCC BAA-301 / DSM 14385 / NBRC 107922 / TMO) (Thermotoga lettingae).